The following is a 147-amino-acid chain: Hemoglobin subunit gamma-1 (147 aa).

An N-acetylglycine; in form Hb F1 modification is found at glycine 2. The region spanning 3–147 (HFTEEDKATI…VASALSSRYH (145 aa)) is the Globin domain. Threonine 13 carries the post-translational modification Phosphothreonine. Serine 45, serine 51, and serine 53 each carry phosphoserine. Lysine 60 carries the post-translational modification N6-acetyllysine. Position 64 (histidine 64) interacts with heme b. Lysine 83 carries the post-translational modification N6-acetyllysine. Residue histidine 93 coordinates heme b. Residue cysteine 94 is modified to S-nitrosocysteine. At serine 140 the chain carries Phosphoserine.

It belongs to the globin family. As to quaternary structure, heterotetramer of two alpha chains and two gamma chains in fetal hemoglobin (Hb F). In the case of deletions affecting one or more of the alpha chains, the excess gamma chains form homotetramers that exhibit neither Bohr effect nor heme-heme cooperativity (hemoglobin Bart's). Post-translationally, acetylation of Gly-2 converts Hb F to the minor Hb F1. As to expression, red blood cells.

Functionally, gamma chains make up the fetal hemoglobin F, in combination with alpha chains. This Homo sapiens (Human) protein is Hemoglobin subunit gamma-1 (HBG1).